Consider the following 280-residue polypeptide: 4-diphosphocytidyl-2-C-methyl-D-erythritol kinase (280 aa).

The active site involves K8. 91–101 (PVAAGLAGGST) contacts ATP. The active site involves D133.

This sequence belongs to the GHMP kinase family. IspE subfamily.

The enzyme catalyses 4-CDP-2-C-methyl-D-erythritol + ATP = 4-CDP-2-C-methyl-D-erythritol 2-phosphate + ADP + H(+). The protein operates within isoprenoid biosynthesis; isopentenyl diphosphate biosynthesis via DXP pathway; isopentenyl diphosphate from 1-deoxy-D-xylulose 5-phosphate: step 3/6. Catalyzes the phosphorylation of the position 2 hydroxy group of 4-diphosphocytidyl-2C-methyl-D-erythritol. This Clostridium botulinum (strain 657 / Type Ba4) protein is 4-diphosphocytidyl-2-C-methyl-D-erythritol kinase.